Consider the following 193-residue polypeptide: Sporulation-specific transcriptional regulator GerR (193 aa).

Positions 1-61 (MTITRQDAWT…RWNSYVRKQY (61 aa)) constitute an HTH myb-type domain. Positions 35 to 57 (FEEVGRALTRTAAACGFRWNSYV) form a DNA-binding region, H-T-H motif. Residues 122-177 (AQEFQLEREKLKEQIQSLQKELEDLRSENQTLRNQLEMTEEDYKALIDIMDRARKM) are a coiled coil.

The protein belongs to the RsfA transcriptional regulator family.

In terms of biological role, transcriptional factor that regulates the expression of several late sporulation genes. Controls genes of both sigma-E and sigma-K regulons, acting alone on some genes and in conjunction with SpoIIID or GerE on others. Regulates, directly or indirectly, the expression of genes encoding coat proteins such as cgeA, cotB, cotC, cotG, cotU and cotY. Controls late sporulation genes in two ways: directly, by binding to the promoter region of genes such as cotB, cotU and spoVIF, and acting directly on their transcription, and indirectly, through the activation of SpoVIF, which stabilizes the transcriptional activator GerE and consequently induces the expression of the GerE-dependent genes, such as cotC and cotG. Its effect is strongly positive on spoVIF, cotC, and cotG, weakly positive on cotB, and negative on cotU. This Bacillus subtilis (strain 168) protein is Sporulation-specific transcriptional regulator GerR.